A 342-amino-acid chain; its full sequence is Antihemorrhagic factor HSF (342 aa).

The signal sequence occupies residues 1–19 (MNSLVALVLLGQIIGSTLS). Cystatin fetuin-A-type domains lie at 22–130 (VRGD…VKCH) and 141–254 (RNCS…SNCV). The Cell attachment site motif lies at 23 to 25 (RGD). Positions 24–108 (GDLECDDKEA…RQQHNHAVEM (85 aa)) are indispensable for metalloproteinase inhibition. Disulfide bonds link Cys-28–Cys-332, Cys-85–Cys-96, Cys-110–Cys-129, Cys-143–Cys-146, Cys-205–Cys-217, and Cys-230–Cys-253. N-linked (GlcNAc...) asparagine glycosylation occurs at Asn-142. N-linked (GlcNAc...) asparagine glycosylation is present at Asn-204. N-linked (GlcNAc...) asparagine glycosylation occurs at Asn-282.

Belongs to the fetuin family. In terms of processing, cys-63 may exist in a mixed disulfide form with a thiol compound such as glutathione. In terms of tissue distribution, expressed by the liver.

The protein resides in the secreted. Functionally, inhibits hemorrhagic and proteolytic activities of metalloproteinases (HR1A, HR1B, HR2a, HR2b and H2 proteinase from T.flavodidis and brevilysins H3, H4, H6 and L4 from A.halys brevicaudus). Has no effect on brevilysins H2. Has no effect on papain and cathepsin-B. The chain is Antihemorrhagic factor HSF from Protobothrops flavoviridis (Habu).